The primary structure comprises 313 residues: Olfactory receptor 51A2 (313 aa).

Topologically, residues 1–27 (MSIINTSYVEITTFFLVGMPGLEYAHI) are extracellular. Asn5 carries an N-linked (GlcNAc...) asparagine glycan. The chain crosses the membrane as a helical span at residues 28–48 (WISIPICSMYLIAILGNGTIL). Residues 49–56 (FIIKTEPS) lie on the Cytoplasmic side of the membrane. A helical transmembrane segment spans residues 57 to 77 (LHGPMYYFLSMLAMSDLGLSL). Residues 78–101 (SSLPTVLSIFLFNAPETSSSACFA) lie on the Extracellular side of the membrane. A disulfide bridge links Cys99 with Cys191. A helical transmembrane segment spans residues 102–122 (QEFFIHGFSVLESSVLLIMSF). Residues 123-141 (DRFLAIHNPLRYTSILTTV) are Cytoplasmic-facing. A helical transmembrane segment spans residues 142-162 (RVAQIGIVFSFKSMLLVLPFP). The Extracellular segment spans residues 163–198 (FTLRSLRYCKKNQLSHSYCLHQDVMKLACSDNRIDV). A helical membrane pass occupies residues 199 to 218 (IYGFFGALCLMVDFILIAVS). At 219–238 (YTLILKTVPGIASKKEELKA) the chain is on the cytoplasmic side. A helical transmembrane segment spans residues 239-259 (LNTCVSHICAVIIFYLPIINL). The Extracellular portion of the chain corresponds to 260 to 274 (AVVHRFAGHVSPLIN). Residues 275 to 295 (VLMANVLLLVPPLMKPIVYCV) traverse the membrane as a helical segment. The Cytoplasmic segment spans residues 296–313 (KTKQIRVRVVAKLCQWKI).

Belongs to the G-protein coupled receptor 1 family.

The protein resides in the cell membrane. In terms of biological role, odorant receptor. This Homo sapiens (Human) protein is Olfactory receptor 51A2 (OR51A2).